The primary structure comprises 469 residues: Ectonucleoside triphosphate diphosphohydrolase 5 (469 aa).

An N-terminal signal peptide occupies residues M1–R24. E172 functions as the Proton acceptor in the catalytic mechanism. An N-linked (GlcNAc...) asparagine glycan is attached at N232. 2 disulfides stabilise this stretch: C272–C303 and C363–C377.

It belongs to the GDA1/CD39 NTPase family. Monomer; active form. Homodimer; disulfide-linked. Homodimers are enzymatically inactive. Ca(2+) serves as cofactor. Requires Mg(2+) as cofactor. Post-translationally, N-glycosylated; high-mannose type. As to expression, expressed in fetal cells and most adult tissues.

Its subcellular location is the endoplasmic reticulum. It localises to the secreted. The enzyme catalyses a ribonucleoside 5'-diphosphate + H2O = a ribonucleoside 5'-phosphate + phosphate + H(+). The catalysed reaction is GDP + H2O = GMP + phosphate + H(+). It catalyses the reaction UDP + H2O = UMP + phosphate + H(+). It carries out the reaction IDP + H2O = IMP + phosphate + H(+). The enzyme catalyses CDP + H2O = CMP + phosphate + H(+). The catalysed reaction is ADP + H2O = AMP + phosphate + H(+). The protein operates within protein modification; protein glycosylation. Hydrolyzes nucleoside diphosphates with a preference for GDP, IDP and UDP compared to ADP and CDP. In the lumen of the endoplasmic reticulum, hydrolyzes UDP that acts as an end-product feedback inhibitor of the UDP-Glc:glycoprotein glucosyltransferases. UMP can be transported back by an UDP-sugar antiporter to the cytosol where it is consumed to regenerate UDP-glucose. Therefore, it positively regulates protein reglucosylation by clearing UDP from the ER lumen and by promoting the regeneration of UDP-glucose. Protein reglucosylation is essential to proper glycoprotein folding and quality control in the ER. The protein is Ectonucleoside triphosphate diphosphohydrolase 5 (ENTPD5) of Mesocricetus auratus (Golden hamster).